The sequence spans 436 residues: MHVDIGAALASAADPGVERATLDDLDEQVAVAHERIEQGRNKGEFGYASLNLLEATDAETIHDAVAPVADAESVITVGIGGSALGAKTITEALAEDPGSHVVLDNVDPEHVRRTLDGLSLADTAINVVSRSGTTAETLANFLVVREAYEDRGVDWTERIVVTTGESGPLRALADQHDLPTLPVPEGVPGRFSALSAVGLVPPAILGIDIEGLLAGGQQAADDLAPSLYDSPAYAYGAMAYALEEAGATVNAVMPYAERLESFGEWFAQLWAESLGKDGRGQTPARALGATDQHSQLQLYRAGHRDKVVTFVRPRERADVSIPDPDHEDLSYLAGTDLGGLIDAEYEATVASLPAADRPALEVEIDRLDAESVGELLYAMEAACVLVGELADVETFTQPAVEWGKNATRALIRGEATDETAVIDERERLRIGETESL.

The active-site Proton donor is E272. Active-site residues include H293 and K404.

This sequence belongs to the GPI family.

The protein resides in the cytoplasm. The enzyme catalyses alpha-D-glucose 6-phosphate = beta-D-fructose 6-phosphate. The protein operates within carbohydrate biosynthesis; gluconeogenesis. It participates in carbohydrate degradation; glycolysis; D-glyceraldehyde 3-phosphate and glycerone phosphate from D-glucose: step 2/4. Its function is as follows. Catalyzes the reversible isomerization of glucose-6-phosphate to fructose-6-phosphate. The protein is Probable glucose-6-phosphate isomerase of Haloarcula marismortui (strain ATCC 43049 / DSM 3752 / JCM 8966 / VKM B-1809) (Halobacterium marismortui).